A 567-amino-acid chain; its full sequence is MATIDKHSYAHMFGPTIGDRVRLGDTDLWLEVEKDFTEYGEEVKFGGGKVIRDGMGQSQASCFDTPDLVITNVVILDHWGIIKADIGIKDGRIAIIGKAGNPDVQDNIDIEIGPGTEIIAGEGQIVTAGGIDAHIHFICPQQIDEALMSGVTTMIGGGTGPATGSNATTCTPGPWNTHKMLQATNDFPMNFGFLGKGNTSLPIALEEQIEAGVCGLKLHEDWGTTPASIDNCLSVAERYDVQIAIHTDTLNESGFVEDTLGAFKGRTIHTYHTEGAGGGHSPDIIRACGESNVLPSSTNPTRPYTINTIDEHLDMLMVCHHLDPAIPEDIAFADSRIRKESIAAEDIMHDLGAISMIASDSQAMGRVGEMITRTWQTAHKMKQQRGPLAPDTERNDNFRLKRYVAKYTINPAISHGISHEVGSIEIGKLADLVLWKPAFFGIKPAMIIKSGFIAAAPMGDANASIPTPQPVYYRPMFGAHGQAPANTSMTFMSQASLDAGVPDKIGLTRMVSACKNTRNIGKDDMIHNSWQPTIEVDAQTYEVRANGELLTCEPVTTLPLAQLYCLF.

The Urease domain maps to 129–567; the sequence is GGIDAHIHFI…LPLAQLYCLF (439 aa). Ni(2+) is bound by residues His-134, His-136, and Lys-217. Lys-217 carries the post-translational modification N6-carboxylysine. A substrate-binding site is contributed by His-219. His-246 and His-272 together coordinate Ni(2+). The Proton donor role is filled by His-320. Position 360 (Asp-360) interacts with Ni(2+).

Belongs to the metallo-dependent hydrolases superfamily. Urease alpha subunit family. As to quaternary structure, heterotrimer of UreA (gamma), UreB (beta) and UreC (alpha) subunits. Three heterotrimers associate to form the active enzyme. It depends on Ni cation as a cofactor. Post-translationally, carboxylation allows a single lysine to coordinate two nickel ions.

The protein resides in the cytoplasm. The enzyme catalyses urea + 2 H2O + H(+) = hydrogencarbonate + 2 NH4(+). Its pathway is nitrogen metabolism; urea degradation; CO(2) and NH(3) from urea (urease route): step 1/1. The chain is Urease subunit alpha from Alteromonas mediterranea (strain DSM 17117 / CIP 110805 / LMG 28347 / Deep ecotype).